The chain runs to 315 residues: Borealin (315 aa).

Disordered regions lie at residues 103 to 126 (IEGH…GASG) and 138 to 226 (LRST…TPPM). Residue T146 is modified to Phosphothreonine. Phosphoserine is present on S152. Residues 153–162 (ARARRARRSR) are compositionally biased toward basic residues. S163 carries the phosphoserine modification. Low complexity predominate over residues 178–188 (SISSSSSSSRN). The residue at position 205 (S205) is a Phosphoserine. T209 carries the phosphothreonine modification. S218, S220, and S244 each carry phosphoserine.

It belongs to the borealin family. Component of the CPC complex. As to expression, ubiquitously expressed in the early embryo. Expression is restricted to the ventral nerve cord and brain during later embryonic stages.

The protein localises to the nucleus. It localises to the chromosome. Its subcellular location is the centromere. It is found in the cytoplasm. The protein resides in the cytoskeleton. The protein localises to the spindle. Its function is as follows. Component of the chromosomal passenger complex (CPC), a complex that acts as a key regulator of embryonic mitosis. The CPC complex has essential functions at the centromere for ensuring sister chromatid cohesion, recruitment of the CPC to kinetochores, and chromosome alignment and segregation. There is no function in meiotic histone phosphorylation or spindle formation. This chain is Borealin (borr), found in Drosophila melanogaster (Fruit fly).